The primary structure comprises 727 residues: ABC transporter G family member STR2 (727 aa).

The Cytoplasmic segment spans residues 1–475 (MKTQGLELET…NFTNIRRTPE (475 aa)). The ABC transporter domain maps to 25 to 275 (LEFESLTYTV…LNRMGRKIPK (251 aa)). 69-76 (GPSGAGKS) contacts ATP. The helical transmembrane segment at 476–496 (LFLSRLMVLTFMGVMMATMFH) threads the bilayer. Over 497-510 (NPKNTLQGITNRLS) the chain is Extracellular. Residues 511 to 531 (FFIFTVCLFFFSSNDAVPAFI) traverse the membrane as a helical segment. The Cytoplasmic portion of the chain corresponds to 532-559 (QERFIFIRETSHNAYRASCYTIASLITH). A helical transmembrane segment spans residues 560–580 (MPFLALQALAYAAIVWFALEL). Over 581 to 583 (RGP) the chain is Extracellular. The chain crosses the membrane as a helical span at residues 584–604 (FIYFFLVLFISLLSTNSFVVF). At 605–612 (VSSIVPNY) the chain is on the cytoplasmic side. Residues 613–633 (ILGYAAVIAFTALFFLFCGYF) traverse the membrane as a helical segment. The Extracellular segment spans residues 634–699 (LSSEDIPLYW…GTEEIKKRNN (66 aa)). An N-linked (GlcNAc...) asparagine glycan is attached at Asn-667. Residues 700 to 720 (VLIMLGWAVLYRILFYIILRF) form a helical membrane-spanning segment. Topologically, residues 721 to 727 (ASKNQRS) are cytoplasmic.

Belongs to the ABC transporter superfamily. ABCG family. Stunted arbuscule (STR) subfamily. As to quaternary structure, heterodimerizes with STR; the resulting transporter is located in the peri-arbuscular membrane. As to expression, expressed constitutively in the vascular tissue of roots.

It is found in the cell membrane. In terms of biological role, together with STR, required for arbuscule development in arbuscular mycorrhizal symbiosis. This chain is ABC transporter G family member STR2, found in Medicago truncatula (Barrel medic).